The sequence spans 463 residues: NADH dehydrogenase [ubiquinone] iron-sulfur protein 2, mitochondrial (463 aa).

A mitochondrion-targeting transit peptide spans 1–33; sequence MAALRVLCGLRGVAAQVLRPGAGVRLPIQPSRG. N6-acetyllysine is present on lysine 62. Arginine 118 bears the Symmetric dimethylarginine mark. Positions 326, 332, and 347 each coordinate [4Fe-4S] cluster.

It belongs to the complex I 49 kDa subunit family. Core subunit of respiratory chain NADH dehydrogenase (Complex I) which is composed of 45 different subunits. Component of the iron-sulfur (IP) fragment of the enzyme. Interacts with NDUFAF3. Interacts with NDUFAF7. Interacts with CERS2. [4Fe-4S] cluster is required as a cofactor. Post-translationally, dimethylation at Arg-118 by NDUFAF7 takes place after NDUFS2 assembles into the complex I, leading to stabilize the early intermediate complex.

Its subcellular location is the mitochondrion inner membrane. It catalyses the reaction a ubiquinone + NADH + 5 H(+)(in) = a ubiquinol + NAD(+) + 4 H(+)(out). Core subunit of the mitochondrial membrane respiratory chain NADH dehydrogenase (Complex I) which catalyzes electron transfer from NADH through the respiratory chain, using ubiquinone as an electron acceptor. Essential for the catalytic activity and assembly of complex I. Redox-sensitive, critical component of the oxygen-sensing pathway in the pulmonary vasculature which plays a key role in acute pulmonary oxygen-sensing and hypoxic pulmonary vasoconstriction. Plays an important role in carotid body sensing of hypoxia. Essential for glia-like neural stem and progenitor cell proliferation, differentiation and subsequent oligodendrocyte or neuronal maturation. The chain is NADH dehydrogenase [ubiquinone] iron-sulfur protein 2, mitochondrial (NDUFS2) from Gorilla gorilla gorilla (Western lowland gorilla).